The sequence spans 216 residues: Flavin-dependent thymidylate synthase (216 aa).

Residues 9 to 206 (GFVELVDVMG…PWTYEAFIKY (198 aa)) enclose the ThyX domain. Residues Ser-55, 78–80 (RHR), and Glu-86 contribute to the FAD site. Residues 75–78 (QWFR), 86–90 (ELSGR), and Arg-145 each bind dUMP. The ThyX motif motif lies at 78-88 (RHRIASYNELS). FAD contacts are provided by residues 161–163 (NAR) and Asn-167. Position 172 (Arg-172) interacts with dUMP. Arg-172 acts as the Involved in ionization of N3 of dUMP, leading to its activation in catalysis.

It belongs to the thymidylate synthase ThyX family. In terms of assembly, homotetramer. FAD is required as a cofactor.

The enzyme catalyses dUMP + (6R)-5,10-methylene-5,6,7,8-tetrahydrofolate + NADPH + H(+) = dTMP + (6S)-5,6,7,8-tetrahydrofolate + NADP(+). Its pathway is pyrimidine metabolism; dTTP biosynthesis. Its function is as follows. Catalyzes the reductive methylation of 2'-deoxyuridine-5'-monophosphate (dUMP) to 2'-deoxythymidine-5'-monophosphate (dTMP) while utilizing 5,10-methylenetetrahydrofolate (mTHF) as the methyl donor, and NADPH and FADH(2) as the reductant. This Thermotoga neapolitana (strain ATCC 49049 / DSM 4359 / NBRC 107923 / NS-E) protein is Flavin-dependent thymidylate synthase.